The chain runs to 668 residues: WD repeat-containing protein 48 homolog (668 aa).

WD repeat units follow at residues 26-65 (QHRN…SEKY), 71-110 (HHND…CMST), 113-152 (THRD…ALTA), 164-203 (GSKD…RRMK), 206-245 (GHTE…CVQT), 248-287 (VHKE…NKTL), 290-329 (EEQA…RCTL), and 350-389 (KGGA…KKEQ). A disordered region spans residues 592–616 (ETTPSGGNANNSLQNSQSDANSEGS).

Belongs to the WD repeat WDR48 family. In terms of assembly, catalytic component of the Usp12-46 deubiquitylase complex consisting of Usp12-46, Wdr20 and Uaf1; regulatory subunit that, together wtih Wdr20, stabilizes Usp12-46. The Usp12-46 deubiquitylase complex associates with arr/arrow; the interaction leads to deubiquitination and stabilization of arr/arrow.

In terms of biological role, regulatory component of the Usp12-46 deubiquitylase complex. activates deubiquitination by increasing the catalytic turnover without increasing the affinity of deubiquitinating enzymes for the substrate. The complex deubiquitylates the wg/wingless-signaling receptor arr/arrow, which stabilizes the receptor and increases its concentration at the cell surface; this enhances the sensitivity of cells to wg/wingless-signal stimulation. This increases the amplitude and spatial range of the signaling response to the wg/wingless morphogen gradient, facilitating the precise concentration-dependent regulation of its target genes. Together with Wdr20 and Usp12-46 required for wg/wingless-mediated signaling in the wing imaginal disc and for wg/wingless-dependent regulation of intestinal stem cell proliferation. The chain is WD repeat-containing protein 48 homolog from Drosophila melanogaster (Fruit fly).